The following is a 182-amino-acid chain: Translation initiation factor IF-3 (182 aa).

Residues 1 to 22 (MPLGDCNISTPDNKQNRKNQEI) are disordered.

This sequence belongs to the IF-3 family. In terms of assembly, monomer.

It localises to the cytoplasm. IF-3 binds to the 30S ribosomal subunit and shifts the equilibrium between 70S ribosomes and their 50S and 30S subunits in favor of the free subunits, thus enhancing the availability of 30S subunits on which protein synthesis initiation begins. The polypeptide is Translation initiation factor IF-3 (Xanthomonas campestris pv. campestris (strain ATCC 33913 / DSM 3586 / NCPPB 528 / LMG 568 / P 25)).